We begin with the raw amino-acid sequence, 557 residues long: Probable protein kinase UbiB (557 aa).

The Protein kinase domain occupies 121–509 (AFDTTPLASA…RKLQTRVVTA (389 aa)). ATP-binding positions include 127 to 135 (LASASIAQV) and Lys-154. Asp-289 (proton acceptor) is an active-site residue. The next 2 helical transmembrane spans lie at 506–526 (VVTA…YGLH) and 535–555 (VPVW…IAWL).

The protein belongs to the ABC1 family. UbiB subfamily.

It is found in the cell inner membrane. The protein operates within cofactor biosynthesis; ubiquinone biosynthesis [regulation]. In terms of biological role, is probably a protein kinase regulator of UbiI activity which is involved in aerobic coenzyme Q (ubiquinone) biosynthesis. This Xanthomonas campestris pv. campestris (strain B100) protein is Probable protein kinase UbiB.